The primary structure comprises 967 residues: Muscular LMNA-interacting protein (967 aa).

The residue at position 129 (Ser-129) is a Phosphoserine. Disordered regions lie at residues 132–154 (EDEA…IATR), 302–336 (GLAS…ASLT), 432–462 (QKVK…HQAS), 506–628 (GSTL…SASH), 644–685 (QTLQ…TPSL), 786–838 (SMHS…SQLT), and 929–967 (FSVR…DSKE). The interval 144-811 (PPGGPGNIAT…GSETIKTPTT (668 aa)) is required for interaction with ISL1. The segment covering 437–455 (TPPTSKKSLSSGSLTTGST) has biased composition (low complexity). Residues 508–523 (TLRSNTTSPQPQTDTF) show a composition bias toward polar residues. Residues 528-541 (VPSVTPVLSPLSSS) are compositionally biased toward low complexity. The segment covering 543 to 556 (GRKDGDSRTPEKNR) has biased composition (basic and acidic residues). 2 stretches are compositionally biased toward polar residues: residues 558–567 (ICIQPSTLAS) and 658–685 (GSAT…TPSL). Ser-792 carries the phosphoserine modification. The span at 800 to 811 (MLGSETIKTPTT) shows a compositional bias: polar residues. Residues 826–835 (SSSSSTASES) are compositionally biased toward low complexity. Polar residues predominate over residues 938-947 (SPTLLSQDTY). The span at 958-967 (PEHDTLDSKE) shows a compositional bias: basic and acidic residues.

In terms of assembly, directly interacts with LMNA. Interacts with ISL1 (via N-terminal domain); the interaction represses ISL1 transactivator activity. Interactions of ISL1 with MLIP1 and GCN5/KAT2A may be mutually exclusive. Post-translationally, may be ubiquitinated by UBE3C ubiquitin ligase; ubiquitination is followed by protein degradation. Predominantly expressed in the heart and skeletal muscle, but detected at lower levels in the lung and brain (at protein level). Also detected in smooth muscle, thymus and kidney. In brain, expressed by a subpopulation of cells within the hippocampus and cortex. In heart, expressed by cardiomyocytes. Expression is reduced in hypertrophic hearts at the transcript level. However, expression in hypertrophic hearts induced by transverse aortic constriction do not differ from control at the protein level.

It is found in the nucleus. The protein resides in the nucleus envelope. It localises to the PML body. The protein localises to the cytoplasm. Its subcellular location is the cytosol. It is found in the cell membrane. The protein resides in the sarcolemma. Required for myoblast differentiation into myotubes, possibly acting as a transcriptional regulator of the myogenic program. Required for cardiac adaptation to stress through integrated regulation of the AKT/mTOR pathways and FOXO1. Regulates cardiac homeostasis and plays a role in the protection against cardiac hypertrophy. Binds chromatin. May act as a transcriptional cofactor for ISL1, repressing its transcriptional activity. May also repress MYOCD transcriptional activity. The polypeptide is Muscular LMNA-interacting protein (Mus musculus (Mouse)).